Reading from the N-terminus, the 285-residue chain is MHSPHADKGNALDTVAHKTLTRGWQAELDLRFTRAAHKTVLTSARHVGPLTVQRPFYPEDDVCHLYLLHPPGGIVGGDELTISATLATDSHALITQPGSGKFYRSRGPQAQLRQDFYLAPQATLEWLPQDTILFPGANANIQSVFHLAQESRLLAWDLLCLGRPVMQETFSHGTLRNRLEVWRDGTPLLIERLHLEGGSLHTVARHPWSGTLLCYPATEKMLDGVREQIAPLGDYAGATLIDSLLALRFLGHDNLLIQRVMRAVWQSLRPQLTQKPPLLPRIWQT.

Belongs to the UreD family. In terms of assembly, ureD, UreF and UreG form a complex that acts as a GTP-hydrolysis-dependent molecular chaperone, activating the urease apoprotein by helping to assemble the nickel containing metallocenter of UreC. The UreE protein probably delivers the nickel.

Its subcellular location is the cytoplasm. Its function is as follows. Required for maturation of urease via the functional incorporation of the urease nickel metallocenter. The chain is Urease accessory protein UreD from Citrobacter koseri (strain ATCC BAA-895 / CDC 4225-83 / SGSC4696).